The sequence spans 203 residues: High frequency lysogenization protein HflD homolog (203 aa).

Belongs to the HflD family.

The protein localises to the cytoplasm. It localises to the cell inner membrane. This is High frequency lysogenization protein HflD homolog from Histophilus somni (strain 2336) (Haemophilus somnus).